A 167-amino-acid polypeptide reads, in one-letter code: Large ribosomal subunit protein uL10 (167 aa).

It belongs to the universal ribosomal protein uL10 family. Part of the ribosomal stalk of the 50S ribosomal subunit. The N-terminus interacts with L11 and the large rRNA to form the base of the stalk. The C-terminus forms an elongated spine to which L12 dimers bind in a sequential fashion forming a multimeric L10(L12)X complex.

Forms part of the ribosomal stalk, playing a central role in the interaction of the ribosome with GTP-bound translation factors. This Mycoplasma mobile (strain ATCC 43663 / 163K / NCTC 11711) (Mesomycoplasma mobile) protein is Large ribosomal subunit protein uL10.